Reading from the N-terminus, the 89-residue chain is Small ribosomal subunit protein bS20 (89 aa).

Residues 1-27 (MANIKSAKKDSIISEERRKKNASQRSK) form a disordered region. The span at 7-18 (AKKDSIISEERR) shows a compositional bias: basic and acidic residues.

It belongs to the bacterial ribosomal protein bS20 family.

Its function is as follows. Binds directly to 16S ribosomal RNA. This Buchnera aphidicola subsp. Schizaphis graminum (strain Sg) protein is Small ribosomal subunit protein bS20.